The chain runs to 287 residues: Agamous-like MADS-box protein AGL53 (287 aa).

The 49-residue stretch at 30-78 (STAKKTTNLSMREQTMFKKALELSTLCNIDVCVIYYGRDGKLIKTWPED) folds into the MADS-box domain. The interval 151–171 (EFGQTRAVSSTTNPLSPPPSL) is disordered.

As to quaternary structure, interacts with MEE14/CBP1.

Its subcellular location is the nucleus. Its function is as follows. Probable transcription factor that may function in the maintenance of the proper function of the central cell in pollen tube attraction. This chain is Agamous-like MADS-box protein AGL53, found in Arabidopsis thaliana (Mouse-ear cress).